Reading from the N-terminus, the 155-residue chain is Small ribosomal subunit protein uS7 (155 aa).

This sequence belongs to the universal ribosomal protein uS7 family. In terms of assembly, part of the 30S ribosomal subunit. Contacts proteins S9 and S11.

In terms of biological role, one of the primary rRNA binding proteins, it binds directly to 16S rRNA where it nucleates assembly of the head domain of the 30S subunit. Is located at the subunit interface close to the decoding center, probably blocks exit of the E-site tRNA. The protein is Small ribosomal subunit protein uS7 of Mycoplasma capricolum subsp. capricolum (strain California kid / ATCC 27343 / NCTC 10154).